The primary structure comprises 64 residues: uncharacterized protein (64 aa).

The disordered stretch occupies residues 1–64 (MNNPNIVPPH…QNQPPQRPQY (64 aa)). A compositionally biased stretch (low complexity) spans 8-32 (PPHFNQHQQQNHNQNQPPHHMNNPN).

This is an uncharacterized protein from Dictyostelium discoideum (Social amoeba).